The following is a 345-amino-acid chain: Twinfilin (345 aa).

2 ADF-H domains span residues 4–139 (QTGI…KHKR) and 177–312 (GISC…DELH). The disordered stretch occupies residues 320–345 (PAFAKPKGPPNRGAKRLTRPSNEDQV).

It belongs to the actin-binding proteins ADF family. Twinfilin subfamily. In terms of assembly, interacts with G-actin; ADP-actin form.

It localises to the cytoplasm. The protein resides in the cytoskeleton. It is found in the cell cortex. In terms of biological role, actin-binding protein involved in motile and morphological processes. Inhibits actin polymerization, likely by sequestering G-actin. The sequence is that of Twinfilin (twf) from Drosophila pseudoobscura pseudoobscura (Fruit fly).